We begin with the raw amino-acid sequence, 166 residues long: Ribosome maturation factor RimP (166 aa).

This sequence belongs to the RimP family.

It is found in the cytoplasm. Its function is as follows. Required for maturation of 30S ribosomal subunits. The chain is Ribosome maturation factor RimP from Psychrobacter cryohalolentis (strain ATCC BAA-1226 / DSM 17306 / VKM B-2378 / K5).